We begin with the raw amino-acid sequence, 150 residues long: MKLNELFAGLPKRRRLKVLGRGLGCGKGKTSGRGHKGQKARSGCAVNGFEGGQQPIFTRLPKRGFRSMSRARYEIVNIGALQRLISEKKIVDASNISKELMAELGMIPSPMSKVKILGKGALKAKVGISYDAVSKAAWEESLLTEGLSDS.

Belongs to the universal ribosomal protein uL15 family. As to quaternary structure, part of the 50S ribosomal subunit.

Binds to the 23S rRNA. This is Large ribosomal subunit protein uL15 from Anaplasma marginale (strain Florida).